We begin with the raw amino-acid sequence, 192 residues long: MITISESAQAHFRKLLEKQAENTNIRVFVMNPGTPNAECGVSYCPPDAVEPEDSRQPFDGFDAIIDPNSAPFLEEAAIDFISDQMGSQLTLKAPNAKMRKVDDNASLAERVEYVLQSQVNPSLAAHGGRVTLTEITDDGVAILQFGGGCNGCSMVDVTLKEGIEKQLLELFPGELTGAKDATEHARGEHSFY.

[4Fe-4S] cluster-binding residues include Cys-149 and Cys-152.

It belongs to the NfuA family. As to quaternary structure, homodimer. It depends on [4Fe-4S] cluster as a cofactor.

Functionally, involved in iron-sulfur cluster biogenesis. Binds a 4Fe-4S cluster, can transfer this cluster to apoproteins, and thereby intervenes in the maturation of Fe/S proteins. Could also act as a scaffold/chaperone for damaged Fe/S proteins. The chain is Fe/S biogenesis protein NfuA from Tolumonas auensis (strain DSM 9187 / NBRC 110442 / TA 4).